We begin with the raw amino-acid sequence, 143 residues long: Putative pre-16S rRNA nuclease (143 aa).

It belongs to the YqgF nuclease family.

Its subcellular location is the cytoplasm. Its function is as follows. Could be a nuclease involved in processing of the 5'-end of pre-16S rRNA. This is Putative pre-16S rRNA nuclease (ybeB) from Lactococcus lactis subsp. lactis (strain IL1403) (Streptococcus lactis).